Consider the following 163-residue polypeptide: Neurotrophin-3 (163 aa).

The signal sequence occupies residues Ile1–Ser3. Positions Thr4–Arg119 are excised as a propeptide. Asn112 is a glycosylation site (N-linked (GlcNAc...) asparagine). The interval Thr114–Ser133 is disordered. Positions Ser123–Ser133 are enriched in basic and acidic residues.

Belongs to the NGF-beta family.

The protein resides in the secreted. Seems to promote the survival of visceral and proprioceptive sensory neurons. The polypeptide is Neurotrophin-3 (NTF3) (Lichanura trivirgata (Rosy boa)).